We begin with the raw amino-acid sequence, 349 residues long: Replication-associated protein (349 aa).

Residues 8–116 (RLNAKNYFLT…DGDTVEWGEF (109 aa)) enclose the CRESS-DNA virus Rep endonuclease domain. The short motif at 15 to 18 (FLTY) is the RCR-1 element. Positions 49, 57, and 59 each coordinate a divalent metal cation. Positions 57-59 (HLH) match the RCR-2 motif. Residue Y103 is the For DNA cleavage activity of the active site. Residues 103-106 (YIDK) carry the RCR-3 motif. D107 contacts a divalent metal cation. Residues 143–153 (AEEALQIIKEE) are binding to RBR1. The oligomerization stretch occupies residues 156-176 (QHFFLQFHNIVSNANRIFQTP). An ATP-binding site is contributed by 221-228 (GPSRTGKT).

This sequence belongs to the geminiviridae Rep protein family. As to quaternary structure, homooligomer. Interacts with the replication enhancer protein (REn). Interacts with host retinoblastoma-related protein 1 (RBR1), and may thereby induce the transcription of host replicative enzymes even if the cell is not dividing anymore. Interacts with host PCNA. Interacts with host SCE1 protein. It depends on Mg(2+) as a cofactor. Mn(2+) is required as a cofactor.

It is found in the host nucleus. Functionally, essential for the replication of viral ssDNA. The closed circular ssDNA genome is first converted to a superhelical dsDNA. Rep binds a specific region at the genome origin of replication. It introduces an endonucleolytic nick within the conserved sequence 5'-TAATATTAC-3' in the intergenic region of the genome present in all geminiviruses, thereby initiating the rolling circle replication (RCR). Following cleavage, binds covalently to the 5'-phosphate of DNA as a tyrosyl ester. The cleavage gives rise to a free 3'-OH that serves as a primer for the cellular DNA polymerase. The polymerase synthesizes the (+) strand DNA by rolling circle mechanism. After one round of replication, a Rep-catalyzed nucleotidyl transfer reaction releases a circular single-stranded virus genome, thereby terminating the replication. Displays origin-specific DNA cleavage, nucleotidyl transferase, ATPase and helicase activities. This chain is Replication-associated protein, found in Capsicum annuum (Capsicum pepper).